Consider the following 249-residue polypeptide: ATP synthase subunit a, chloroplastic (249 aa).

5 helical membrane-spanning segments follow: residues 38–58 (AQVL…AVLA), 97–117 (VPFI…GALL), 136–156 (INTT…AGLH), 201–221 (LVVA…MMFL), and 222–242 (GLFT…AYIG).

The protein belongs to the ATPase A chain family. As to quaternary structure, F-type ATPases have 2 components, CF(1) - the catalytic core - and CF(0) - the membrane proton channel. CF(1) has five subunits: alpha(3), beta(3), gamma(1), delta(1), epsilon(1). CF(0) has four main subunits: a, b, b' and c.

The protein resides in the plastid. It is found in the chloroplast thylakoid membrane. Key component of the proton channel; it plays a direct role in the translocation of protons across the membrane. In Physcomitrium patens (Spreading-leaved earth moss), this protein is ATP synthase subunit a, chloroplastic.